Reading from the N-terminus, the 527-residue chain is Protein TIC 56, chloroplastic (527 aa).

A chloroplast-targeting transit peptide spans 1–48; it reads MSSMNFNPFQNWFEKPPNPVPSINFVSLADSFFPKSQSPNFASIGLPK. The disordered stretch occupies residues 43-67; it reads SIGLPKFSKKSPKPETAGTDEPGPY. A Deamidated asparagine modification is found at asparagine 350. A compositionally biased stretch (basic and acidic residues) spans 491-508; that stretch reads RREEELREEDLKHYSGRT. The interval 491–527 is disordered; sequence RREEELREEDLKHYSGRTDEDEEEEEEEDDDSNSKKD. Acidic residues predominate over residues 509–521; sequence DEDEEEEEEEDDD.

In terms of assembly, part of the Tic complex. Component of the 1-MD complex, composed of TIC20-I, TIC214, TIC100 and TIC56. Interacts with the translocating preproteins. Hydrolysis of ATP is essential for the formation of this complex. The 1-MD complex interacts with TIC21.

Its subcellular location is the plastid. It localises to the chloroplast inner membrane. Its function is as follows. Involved in protein precursor import into chloroplasts. May be part of an intermediate translocation complex acting as a protein-conducting channel at the inner envelope. The chain is Protein TIC 56, chloroplastic from Arabidopsis thaliana (Mouse-ear cress).